Reading from the N-terminus, the 377-residue chain is Anhydro-N-acetylmuramic acid kinase (377 aa).

Residue 12 to 19 (GTSLDGID) coordinates ATP.

It belongs to the anhydro-N-acetylmuramic acid kinase family.

It carries out the reaction 1,6-anhydro-N-acetyl-beta-muramate + ATP + H2O = N-acetyl-D-muramate 6-phosphate + ADP + H(+). It participates in amino-sugar metabolism; 1,6-anhydro-N-acetylmuramate degradation. Its pathway is cell wall biogenesis; peptidoglycan recycling. Catalyzes the specific phosphorylation of 1,6-anhydro-N-acetylmuramic acid (anhMurNAc) with the simultaneous cleavage of the 1,6-anhydro ring, generating MurNAc-6-P. Is required for the utilization of anhMurNAc either imported from the medium or derived from its own cell wall murein, and thus plays a role in cell wall recycling. The sequence is that of Anhydro-N-acetylmuramic acid kinase from Methylorubrum populi (strain ATCC BAA-705 / NCIMB 13946 / BJ001) (Methylobacterium populi).